The sequence spans 296 residues: Cell division protein DivIB (296 aa).

At 1–29 (MTKEIPKINNEYLKEKRKKQRIQQRRVQR) the chain is on the cytoplasmic side. A helical membrane pass occupies residues 30 to 50 (MIVGILVVIVLLILVYMFTPI). Positions 51–119 (SHIKSADIKG…NPIEVNVKEH (69 aa)) constitute a POTRA domain. At 51 to 296 (SHIKSADIKG…NKIKDEESSE (246 aa)) the chain is on the extracellular side. The span at 256–273 (NNGQTSSASAKEVQSGTA) shows a compositional bias: polar residues. The segment at 256–296 (NNGQTSSASAKEVQSGTASEDKAKDDLQKALNKIKDEESSE) is disordered. Residues 274-296 (SEDKAKDDLQKALNKIKDEESSE) show a composition bias toward basic and acidic residues.

Belongs to the FtsQ/DivIB family. DivIB subfamily.

Its subcellular location is the cell membrane. Its function is as follows. Cell division protein that may be involved in stabilizing or promoting the assembly of the division complex. This Staphylococcus pseudintermedius (strain HKU10-03) protein is Cell division protein DivIB.